Consider the following 142-residue polypeptide: Hemoglobin subunit alpha (142 aa).

The Globin domain maps to 2-142 (VLSGEDKSNI…VSTVLTSKYR (141 aa)). Position 4 is a phosphoserine (S4). N6-succinyllysine occurs at positions 8 and 12. K17 carries the post-translational modification N6-acetyllysine; alternate. K17 is modified (N6-succinyllysine; alternate). Y25 is modified (phosphotyrosine). S36 is subject to Phosphoserine. Residue K41 is modified to N6-succinyllysine. At S50 the chain carries Phosphoserine. H59 provides a ligand contact to O2. Position 88 (H88) interacts with heme b. At S103 the chain carries Phosphoserine. Position 109 is a phosphothreonine (T109). S112, S125, and S132 each carry phosphoserine. Phosphothreonine is present on residues T135 and T138. S139 carries the post-translational modification Phosphoserine.

Belongs to the globin family. In terms of assembly, heterotetramer of two alpha chains and two beta chains. Red blood cells.

Its function is as follows. Involved in oxygen transport from the lung to the various peripheral tissues. Functionally, hemopressin acts as an antagonist peptide of the cannabinoid receptor CNR1. Hemopressin-binding efficiently blocks cannabinoid receptor CNR1 and subsequent signaling. The sequence is that of Hemoglobin subunit alpha (Hba) from Mus musculus (Mouse).